A 626-amino-acid polypeptide reads, in one-letter code: Chaperone protein HtpG (626 aa).

The a; substrate-binding stretch occupies residues 1 to 331 (MSETVERHEF…TDDLPLNVSR (331 aa)). The interval 332–544 (EMLQSTPTLQ…GMGPDLQMQR (213 aa)) is b. The interval 545–626 (LLRRAGRGFG…GTAAKPAGSA (82 aa)) is c.

The protein belongs to the heat shock protein 90 family. As to quaternary structure, homodimer.

Its subcellular location is the cytoplasm. Molecular chaperone. Has ATPase activity. This chain is Chaperone protein HtpG, found in Methylorubrum extorquens (strain CM4 / NCIMB 13688) (Methylobacterium extorquens).